A 149-amino-acid chain; its full sequence is MQVILLDKIVHLGQVGDQVNVKSGFARNFLIPQGKAVMATKANIEHFEARRAELEATAAANLAAAQARAAEVTALGSVTIASKAGDEGRLFGAITTRDVAEAVTAAGVKIAKSEVRLPNGPIRTLGDHDVRFQLHGEVFATLDVIVVAE.

Belongs to the bacterial ribosomal protein bL9 family.

Binds to the 23S rRNA. The polypeptide is Large ribosomal subunit protein bL9 (Haemophilus influenzae (strain PittGG)).